We begin with the raw amino-acid sequence, 384 residues long: MKNLTILGSTGSIGVSTLEIVAAHPEKFKIIALTAGENIDLLKEQIDAFAPQLVAVKNEELALKLEGMLSCRKTAVMYGVEGMIAAATASDTNMVVAAIVGAAGLLPTSAAIEAGKDIALANKETLVTAGRLIMDMVKTRGVKLYPVDSEHSAVFQSLQGHRKEDVRRIILTASGGPFLNLSGEKLAQVTVKDALNHPNWSMGQKITIDSASMMNKGLEVIEASWLFDMPAEKISVNIHPQSIIHSMVEYNDGCVMAQMGIPDMKAPIAYALTYPGRVPTGVKPLDLTTLSGLTFFNPDVVRFPALQLAYRAMKDGESMPTVMNAANEVAVAAFLSGRIKFTDIARSIEKTMDLHHPRSLSSIEDVIEIDQWGRERCSELLQSF.

Residues Thr10, Gly11, Ser12, Ile13, Gly36, Asn38, and Asn122 each contribute to the NADPH site. Position 123 (Lys123) interacts with 1-deoxy-D-xylulose 5-phosphate. Glu124 contacts NADPH. Asp148 contributes to the Mn(2+) binding site. Residues Ser149, Glu150, Ser174, and His197 each contribute to the 1-deoxy-D-xylulose 5-phosphate site. Residue Glu150 participates in Mn(2+) binding. Gly203 serves as a coordination point for NADPH. 1-deoxy-D-xylulose 5-phosphate-binding residues include Ser210, Asn215, Lys216, and Glu219. Mn(2+) is bound at residue Glu219.

It belongs to the DXR family. It depends on Mg(2+) as a cofactor. Requires Mn(2+) as cofactor.

The catalysed reaction is 2-C-methyl-D-erythritol 4-phosphate + NADP(+) = 1-deoxy-D-xylulose 5-phosphate + NADPH + H(+). It participates in isoprenoid biosynthesis; isopentenyl diphosphate biosynthesis via DXP pathway; isopentenyl diphosphate from 1-deoxy-D-xylulose 5-phosphate: step 1/6. Its function is as follows. Catalyzes the NADPH-dependent rearrangement and reduction of 1-deoxy-D-xylulose-5-phosphate (DXP) to 2-C-methyl-D-erythritol 4-phosphate (MEP). This Geotalea daltonii (strain DSM 22248 / JCM 15807 / FRC-32) (Geobacter daltonii) protein is 1-deoxy-D-xylulose 5-phosphate reductoisomerase.